The sequence spans 119 residues: uncharacterized protein (119 aa).

Cys-13 is a catalytic residue.

The protein belongs to the ArsC family.

This is an uncharacterized protein from Escherichia coli (strain K12).